A 238-amino-acid chain; its full sequence is Phosphoribosylaminoimidazole-succinocarboxamide synthase (238 aa).

It belongs to the SAICAR synthetase family.

It carries out the reaction 5-amino-1-(5-phospho-D-ribosyl)imidazole-4-carboxylate + L-aspartate + ATP = (2S)-2-[5-amino-1-(5-phospho-beta-D-ribosyl)imidazole-4-carboxamido]succinate + ADP + phosphate + 2 H(+). It participates in purine metabolism; IMP biosynthesis via de novo pathway; 5-amino-1-(5-phospho-D-ribosyl)imidazole-4-carboxamide from 5-amino-1-(5-phospho-D-ribosyl)imidazole-4-carboxylate: step 1/2. This is Phosphoribosylaminoimidazole-succinocarboxamide synthase from Nitrosococcus oceani (strain ATCC 19707 / BCRC 17464 / JCM 30415 / NCIMB 11848 / C-107).